We begin with the raw amino-acid sequence, 296 residues long: Chondrolectin (296 aa).

A signal peptide spans 1–20; that stretch reads MRATLRILCALTFLVSCSRG. Residues 21 to 238 lie on the Extracellular side of the membrane; it reads ARVVSGQTVC…RLIIAGPSSM (218 aa). Residues 38–187 enclose the C-type lectin domain; it reads CYKIAYFKDV…CNMKHNFICK (150 aa). The span at 197-221 shows a compositional bias: basic and acidic residues; that stretch reads VQSDRPGGHDVDLSTEDKEDRRTPP. A disordered region spans residues 197-229; that stretch reads VQSDRPGGHDVDLSTEDKEDRRTPPTDEDESPR. A helical membrane pass occupies residues 239-266; sequence LLIYVIIPTIPLLLLILVASGTCCFQML. Residues 267–296 lie on the Cytoplasmic side of the membrane; the sequence is SKSKPRTKTSVNQSTLWISKTPKIDSGMEV.

In terms of tissue distribution, expressed in developing motor neurons.

Its subcellular location is the membrane. Functionally, plays a role in the development of the nervous system such as in neurite outgrowth and elongation. Involved in motor axon growth and guidance. Required for correct interactions of motor axons with the horizontal myoseptum. The chain is Chondrolectin (chodl) from Danio rerio (Zebrafish).